The chain runs to 102 residues: Aspartyl/glutamyl-tRNA(Asn/Gln) amidotransferase subunit C (102 aa).

It belongs to the GatC family. As to quaternary structure, heterotrimer of A, B and C subunits.

The enzyme catalyses L-glutamyl-tRNA(Gln) + L-glutamine + ATP + H2O = L-glutaminyl-tRNA(Gln) + L-glutamate + ADP + phosphate + H(+). It carries out the reaction L-aspartyl-tRNA(Asn) + L-glutamine + ATP + H2O = L-asparaginyl-tRNA(Asn) + L-glutamate + ADP + phosphate + 2 H(+). Its function is as follows. Allows the formation of correctly charged Asn-tRNA(Asn) or Gln-tRNA(Gln) through the transamidation of misacylated Asp-tRNA(Asn) or Glu-tRNA(Gln) in organisms which lack either or both of asparaginyl-tRNA or glutaminyl-tRNA synthetases. The reaction takes place in the presence of glutamine and ATP through an activated phospho-Asp-tRNA(Asn) or phospho-Glu-tRNA(Gln). The polypeptide is Aspartyl/glutamyl-tRNA(Asn/Gln) amidotransferase subunit C (Bordetella pertussis (strain Tohama I / ATCC BAA-589 / NCTC 13251)).